The sequence spans 325 residues: Formimidoylglutamase (325 aa).

Mn(2+)-binding residues include His-130, Asp-156, His-158, Asp-160, Cys-244, and Asp-246.

Belongs to the arginase family. Requires Mn(2+) as cofactor.

It catalyses the reaction N-formimidoyl-L-glutamate + H2O = formamide + L-glutamate. It participates in amino-acid degradation; L-histidine degradation into L-glutamate; L-glutamate from N-formimidoyl-L-glutamate (hydrolase route): step 1/1. In terms of biological role, catalyzes the conversion of N-formimidoyl-L-glutamate to L-glutamate and formamide. The chain is Formimidoylglutamase from Geobacillus sp. (strain WCH70).